A 401-amino-acid chain; its full sequence is Nicotinate phosphoribosyltransferase (401 aa).

Position 224 is a phosphohistidine; by autocatalysis (histidine 224).

Belongs to the NAPRTase family. Transiently phosphorylated on a His residue during the reaction cycle. Phosphorylation strongly increases the affinity for substrates and increases the rate of nicotinate D-ribonucleotide production. Dephosphorylation regenerates the low-affinity form of the enzyme, leading to product release.

It carries out the reaction nicotinate + 5-phospho-alpha-D-ribose 1-diphosphate + ATP + H2O = nicotinate beta-D-ribonucleotide + ADP + phosphate + diphosphate. Its pathway is cofactor biosynthesis; NAD(+) biosynthesis; nicotinate D-ribonucleotide from nicotinate: step 1/1. In terms of biological role, catalyzes the synthesis of beta-nicotinate D-ribonucleotide from nicotinate and 5-phospho-D-ribose 1-phosphate at the expense of ATP. The chain is Nicotinate phosphoribosyltransferase from Pseudomonas putida (strain GB-1).